The following is a 147-amino-acid chain: Large ribosomal subunit protein uL13 (147 aa).

Belongs to the universal ribosomal protein uL13 family. As to quaternary structure, part of the 50S ribosomal subunit.

Functionally, this protein is one of the early assembly proteins of the 50S ribosomal subunit, although it is not seen to bind rRNA by itself. It is important during the early stages of 50S assembly. The chain is Large ribosomal subunit protein uL13 from Pseudothermotoga lettingae (strain ATCC BAA-301 / DSM 14385 / NBRC 107922 / TMO) (Thermotoga lettingae).